We begin with the raw amino-acid sequence, 859 residues long: DNA mismatch repair protein MutS (859 aa).

622–629 provides a ligand contact to ATP; it reads GPNMGGKS.

Belongs to the DNA mismatch repair MutS family.

This protein is involved in the repair of mismatches in DNA. It is possible that it carries out the mismatch recognition step. This protein has a weak ATPase activity. This Coxiella burnetii (strain Dugway 5J108-111) protein is DNA mismatch repair protein MutS.